The sequence spans 1033 residues: Kinesin-like protein KIN-4A (1033 aa).

Residues 11–366 (CVKVAVHVRP…LKYANRARNI (356 aa)) enclose the Kinesin motor domain. 89 to 96 (GQTGSGKT) contributes to the ATP binding site. Residues 443 to 462 (QDGSPCSVESDGLKRNLRSR) are disordered. A compositionally biased stretch (basic and acidic residues) spans 453 to 462 (DGLKRNLRSR). Positions 525–638 (ALKQHFGKKI…IKQEAEQFRQ (114 aa)) form a coiled coil. Residues 763–785 (DELDSKGPSPSRGKNGCARGSSL) are disordered. Positions 863-895 (IEIREMKEQLKELVGLLRQSELQRKEVENELKL) form a coiled coil.

It belongs to the TRAFAC class myosin-kinesin ATPase superfamily. Kinesin family. KIN-4 subfamily. Homodimer. As to expression, expressed in cotton fibers.

The protein localises to the cytoplasm. Kinesin-like motor protein involved in the control of the oriented deposition of cellulose microfibrils. The sequence is that of Kinesin-like protein KIN-4A from Gossypium hirsutum (Upland cotton).